The sequence spans 405 residues: Acetate kinase (405 aa).

Asn-7 serves as a coordination point for Mg(2+). Position 14 (Lys-14) interacts with ATP. Arg-98 is a binding site for substrate. The active-site Proton donor/acceptor is Asp-155. ATP contacts are provided by residues 214-218, 289-291, and 337-341; these read HLGNG, DLR, and GVGEN. Residue Glu-390 coordinates Mg(2+).

The protein belongs to the acetokinase family. As to quaternary structure, homodimer. The cofactor is Mg(2+). It depends on Mn(2+) as a cofactor.

The protein localises to the cytoplasm. It carries out the reaction acetate + ATP = acetyl phosphate + ADP. Its pathway is metabolic intermediate biosynthesis; acetyl-CoA biosynthesis; acetyl-CoA from acetate: step 1/2. Its function is as follows. Catalyzes the formation of acetyl phosphate from acetate and ATP. Can also catalyze the reverse reaction. In Gloeothece citriformis (strain PCC 7424) (Cyanothece sp. (strain PCC 7424)), this protein is Acetate kinase.